A 512-amino-acid chain; its full sequence is Probable cytosol aminopeptidase (512 aa).

Lys-281 and Asp-286 together coordinate Mn(2+). The active site involves Lys-293. Positions 304, 363, and 365 each coordinate Mn(2+). Arg-367 is a catalytic residue.

This sequence belongs to the peptidase M17 family. Mn(2+) serves as cofactor.

It is found in the cytoplasm. It catalyses the reaction Release of an N-terminal amino acid, Xaa-|-Yaa-, in which Xaa is preferably Leu, but may be other amino acids including Pro although not Arg or Lys, and Yaa may be Pro. Amino acid amides and methyl esters are also readily hydrolyzed, but rates on arylamides are exceedingly low.. The enzyme catalyses Release of an N-terminal amino acid, preferentially leucine, but not glutamic or aspartic acids.. Its function is as follows. Presumably involved in the processing and regular turnover of intracellular proteins. Catalyzes the removal of unsubstituted N-terminal amino acids from various peptides. This chain is Probable cytosol aminopeptidase, found in Koribacter versatilis (strain Ellin345).